A 135-amino-acid chain; its full sequence is Large ribosomal subunit protein uL16c (135 aa).

This sequence belongs to the universal ribosomal protein uL16 family. Part of the 50S ribosomal subunit.

The protein resides in the plastid. It localises to the chloroplast. This chain is Large ribosomal subunit protein uL16c, found in Coffea arabica (Arabian coffee).